The following is a 425-amino-acid chain: Sucrose-phosphatase 2 (425 aa).

This sequence belongs to the sucrose phosphatase family. As to quaternary structure, homodimer. Requires Mg(2+) as cofactor.

It carries out the reaction sucrose 6(F)-phosphate + H2O = sucrose + phosphate. It functions in the pathway glycan biosynthesis; sucrose biosynthesis; sucrose from D-fructose 6-phosphate and UDP-alpha-D-glucose: step 2/2. Its activity is regulated as follows. Inhibited by EDTA. Its function is as follows. Catalyzes the final step of sucrose synthesis. This chain is Sucrose-phosphatase 2 (SPP2), found in Nicotiana tabacum (Common tobacco).